The following is a 38-amino-acid chain: Photosystem II reaction center protein L (38 aa).

The helical transmembrane segment at 17 to 37 threads the bilayer; that stretch reads SLYWGLLLIFVLAVLFSSYIF.

This sequence belongs to the PsbL family. PSII is composed of 1 copy each of membrane proteins PsbA, PsbB, PsbC, PsbD, PsbE, PsbF, PsbH, PsbI, PsbJ, PsbK, PsbL, PsbM, PsbT, PsbX, PsbY, PsbZ, Psb30/Ycf12, at least 3 peripheral proteins of the oxygen-evolving complex and a large number of cofactors. It forms dimeric complexes.

Its subcellular location is the plastid. It localises to the chloroplast thylakoid membrane. Functionally, one of the components of the core complex of photosystem II (PSII). PSII is a light-driven water:plastoquinone oxidoreductase that uses light energy to abstract electrons from H(2)O, generating O(2) and a proton gradient subsequently used for ATP formation. It consists of a core antenna complex that captures photons, and an electron transfer chain that converts photonic excitation into a charge separation. This subunit is found at the monomer-monomer interface and is required for correct PSII assembly and/or dimerization. The polypeptide is Photosystem II reaction center protein L (Tupiella akineta (Green alga)).